Reading from the N-terminus, the 102-residue chain is Protamine-2 (102 aa).

Residues 1-102 (MVRYRVRSPS…RTRRRTCRKH (102 aa)) form a disordered region. A phosphoserine mark is found at Ser-8, Ser-10, and Ser-37. The span at 39–48 (EHVEVYERTH) shows a compositional bias: basic and acidic residues. Positions 49-102 (GHSHYRRRHCSRRRLRRIHRQQHRSCRRRKRRSCRHRRRHRRGCRTRRRTCRKH) are enriched in basic residues.

It belongs to the protamine P2 family. As to quaternary structure, interacts with TDRP. Proteolytic processing into mature chains is required for histone eviction during spermatogenesis. Transition proteins (TNP1 and TNP2) are required for processing. As to expression, testis.

The protein resides in the nucleus. It localises to the chromosome. In terms of biological role, protamines substitute for histones in the chromatin of sperm during the haploid phase of spermatogenesis. They compact sperm DNA into a highly condensed, stable and inactive complex. This is Protamine-2 (PRM2) from Pan paniscus (Pygmy chimpanzee).